The primary structure comprises 194 residues: Small ribosomal subunit protein uS7 (194 aa).

The protein belongs to the universal ribosomal protein uS7 family. Part of the 30S ribosomal subunit.

Functionally, one of the primary rRNA binding proteins, it binds directly to 16S rRNA where it nucleates assembly of the head domain of the 30S subunit. Is located at the subunit interface close to the decoding center. The sequence is that of Small ribosomal subunit protein uS7 from Methanospirillum hungatei JF-1 (strain ATCC 27890 / DSM 864 / NBRC 100397 / JF-1).